Consider the following 357-residue polypeptide: DNA replication and repair protein RecF (357 aa).

Residue 30 to 37 (GANGSGKT) coordinates ATP.

It belongs to the RecF family.

It is found in the cytoplasm. The RecF protein is involved in DNA metabolism; it is required for DNA replication and normal SOS inducibility. RecF binds preferentially to single-stranded, linear DNA. It also seems to bind ATP. The chain is DNA replication and repair protein RecF from Salmonella agona (strain SL483).